A 304-amino-acid chain; its full sequence is MTKKIKCALIGPGNIGTDLLAKLQRSPVLEPIWMVGIDPESDGLKRAREMGIKTTADGVDGLIPHMQADGVQIVFDATSAYVHADNSRKVNALGALMIDLTPAAIGPFCVPTVNLKEHVGKGEMNVNMVTCGGQATIPMVAAVSRVQPVAYGEIVATVSSKSAGPGTRKNIDEFTRTTAGAVEKVGGAKKGKAIIILNPAEPPLIMRDTVHCLLESEPDQAKITESIHAMIKEVQKYVPGYKLVNGPVFDGLRVSVYLEVEGLGDYLPKYAGNLDIMTAAAARTAEMFAEEILAGQLTLQPVHA.

The active-site Acyl-thioester intermediate is the cysteine 131. NAD(+) is bound by residues 162-170 (SAGPGTRKN) and asparagine 273.

It belongs to the acetaldehyde dehydrogenase family. In terms of assembly, heterotetramer composed of two BphI (aldolase) and two BphJ (dehydrogenase).

The enzyme catalyses acetaldehyde + NAD(+) + CoA = acetyl-CoA + NADH + H(+). It carries out the reaction propanal + NAD(+) + CoA = propanoyl-CoA + NADH + H(+). It participates in xenobiotic degradation; polychlorinated biphenyl degradation. With respect to regulation, bound pyruvate or other intermediates in the aldol addition reaction catalyzed by BphI allosterically activates BphJ reductive deacylation activity. Functionally, catalyzes the conversion of acetaldehyde or propanal to acetyl-CoA or propanoyl-CoA, respectively, using NAD(+) and coenzyme A. Displays broad specificity since it can utilize aliphatic aldehydes from two to five carbons in length as substrates; the aldehyde substrates can be directly channeled from the aldolase BphI to the dehydrogenase BphJ. Is the final enzyme in the meta-cleavage pathway for the degradation of polychlorinated biphenyls (PCBs). Is also able to utilize NADP(+) instead of NAD(+). Is not active with succinic semialdehyde or picolinaldehyde as substrates. Can also catalyze the reverse reaction, i.e. the reductive deacylation of acetyl-CoA to acetaldehyde, which is then channeled to the BphI active site. The BphI-BphJ enzyme complex exhibits unique bidirectionality in substrate channeling and allosteric activation. The polypeptide is Acetaldehyde dehydrogenase 4 (bphJ) (Paraburkholderia xenovorans (strain LB400)).